The following is a 228-amino-acid chain: Extracellular protease inhibitor 10 (228 aa).

Positions 1–22 (MKSAFTLSLALVAVTATISAAA) are cleaved as a signal peptide. 3 Kazal-like domains span residues 23–72 (DDNC…ECAS), 90–127 (TSGTVGCPDMCLDVYDPVSDENGKEYSNQCYMEMAKCK), and 156–208 (GYQG…EGTL). Residue Asn25 is glycosylated (N-linked (GlcNAc...) asparagine). 3 disulfide bridges follow: Cys26/Cys56, Cys30/Cys49, and Cys38/Cys70. The tract at residues 69–92 (ECASTPASSATPSPVTSSTGSTSG) is disordered. The segment covering 71–92 (ASTPASSATPSPVTSSTGSTSG) has biased composition (low complexity). Cystine bridges form between Cys96/Cys126, Cys100/Cys119, Cys162/Cys193, and Cys167/Cys186. Asn199 carries an N-linked (GlcNAc...) asparagine glycan.

In terms of assembly, interacts with host subtilisin-like protease P69B.

It is found in the secreted. Secreted effector that interacts with and inhibits the pathogenesis-related P69B subtilisin-like serine protease of host tomato. Inhibition of host proteases by a pathogen extracellular protease inhibitor forms a specific type of defense-counterdefense mechanism between plants and microbial pathogens. This Phytophthora infestans (strain T30-4) (Potato late blight agent) protein is Extracellular protease inhibitor 10.